The sequence spans 161 residues: Nucleotide-binding protein RSc2549 (161 aa).

The protein belongs to the YajQ family.

Nucleotide-binding protein. This Ralstonia nicotianae (strain ATCC BAA-1114 / GMI1000) (Ralstonia solanacearum) protein is Nucleotide-binding protein RSc2549.